A 161-amino-acid polypeptide reads, in one-letter code: Urease accessory protein UreE (161 aa).

It belongs to the UreE family.

The protein resides in the cytoplasm. In terms of biological role, involved in urease metallocenter assembly. Binds nickel. Probably functions as a nickel donor during metallocenter assembly. This is Urease accessory protein UreE from Pseudarthrobacter chlorophenolicus (strain ATCC 700700 / DSM 12829 / CIP 107037 / JCM 12360 / KCTC 9906 / NCIMB 13794 / A6) (Arthrobacter chlorophenolicus).